Reading from the N-terminus, the 216-residue chain is Thymidine kinase (216 aa).

ATP-binding positions include 9–16 and 86–89; these read GTMDCGKS and DEAQ. E87 acts as the Proton acceptor in catalysis.

It belongs to the thymidine kinase family. In terms of assembly, homotetramer.

The protein localises to the cytoplasm. The enzyme catalyses thymidine + ATP = dTMP + ADP + H(+). This chain is Thymidine kinase, found in Streptomyces avermitilis (strain ATCC 31267 / DSM 46492 / JCM 5070 / NBRC 14893 / NCIMB 12804 / NRRL 8165 / MA-4680).